The primary structure comprises 403 residues: Na(+)-translocating NADH-quinone reductase subunit B (403 aa).

The next 9 membrane-spanning stretches (helical) occupy residues 56–76 (MMIT…WNTG), 121–141 (AYFL…EVLF), 163–183 (ILPP…GVVI), 220–240 (WTAV…SGGI), 265–285 (TSTL…IASW), 287–307 (IVSG…LIGS), 312–332 (MFAM…GMFF), 348–368 (WIFG…NPAF), and 371–391 (GMML…HFVV). FMN phosphoryl threonine is present on Thr230.

This sequence belongs to the NqrB/RnfD family. Composed of six subunits; NqrA, NqrB, NqrC, NqrD, NqrE and NqrF. FMN serves as cofactor.

It is found in the cell inner membrane. It catalyses the reaction a ubiquinone + n Na(+)(in) + NADH + H(+) = a ubiquinol + n Na(+)(out) + NAD(+). Its function is as follows. NQR complex catalyzes the reduction of ubiquinone-1 to ubiquinol by two successive reactions, coupled with the transport of Na(+) ions from the cytoplasm to the periplasm. NqrA to NqrE are probably involved in the second step, the conversion of ubisemiquinone to ubiquinol. The protein is Na(+)-translocating NADH-quinone reductase subunit B of Ectopseudomonas mendocina (strain ymp) (Pseudomonas mendocina).